Reading from the N-terminus, the 690-residue chain is Protein arginine N-methyltransferase 7 (690 aa).

SAM-dependent MTase PRMT-type domains lie at 14-357 and 366-690; these read QNSW…YSLW and TKSV…QKKL.

This sequence belongs to the class I-like SAM-binding methyltransferase superfamily. Protein arginine N-methyltransferase family. PRMT7 subfamily.

In terms of biological role, essential arginine methyltransferase that can both catalyze the formation of omega-N monomethylarginine (MMA) and symmetrical dimethylarginine (sDMA). Specifically mediates the symmetrical dimethylation of arginine residues in the small nuclear ribonucleoproteins SmD1 and SmD3. This is Protein arginine N-methyltransferase 7 (Art7) from Drosophila sechellia (Fruit fly).